A 220-amino-acid chain; its full sequence is Ribonuclease HII (220 aa).

An RNase H type-2 domain is found at 27-220 (CIIVGVDEVG…SKISYMFKNS (194 aa)). Positions 33, 34, and 128 each coordinate a divalent metal cation.

Belongs to the RNase HII family. The cofactor is Mn(2+). It depends on Mg(2+) as a cofactor.

The protein localises to the cytoplasm. The enzyme catalyses Endonucleolytic cleavage to 5'-phosphomonoester.. Its function is as follows. Endonuclease that specifically degrades the RNA of RNA-DNA hybrids. The chain is Ribonuclease HII from Ehrlichia ruminantium (strain Gardel).